Reading from the N-terminus, the 126-residue chain is Glycine cleavage system H protein (126 aa).

A Lipoyl-binding domain is found at 22–104 (KAYIGITSFA…YEQAWMIVVE (83 aa)). An N6-lipoyllysine modification is found at K63.

This sequence belongs to the GcvH family. The glycine cleavage system is composed of four proteins: P, T, L and H. (R)-lipoate serves as cofactor.

Its function is as follows. The glycine cleavage system catalyzes the degradation of glycine. The H protein shuttles the methylamine group of glycine from the P protein to the T protein. In terms of biological role, is also involved in protein lipoylation via its role as an octanoyl/lipoyl carrier protein intermediate. The sequence is that of Glycine cleavage system H protein from Brevibacillus brevis (strain 47 / JCM 6285 / NBRC 100599).